A 934-amino-acid chain; its full sequence is Serine/threonine-protein kinase atg1 (934 aa).

Positions 22–328 (YTRLDEIGRG…SDFFDCDTIT (307 aa)) constitute a Protein kinase domain. ATP-binding positions include 28–36 (IGRGSFATV) and lysine 51. Residue aspartate 165 is the Proton acceptor of the active site. Disordered stretches follow at residues 335–432 (IADD…PRRP), 462–481 (RNTY…TKEE), 531–580 (RRPG…YGQS), 684–703 (TDPS…TDLT), 800–822 (RLPP…GSGA), and 878–900 (EEEE…RRDG). Residues 340-368 (PSTSRRSSVAVNTSGSTSRPQSRTGSRTP) are compositionally biased toward polar residues. Residues 371 to 386 (MKREKDASYPGKKDDQ) show a composition bias toward basic and acidic residues. Positions 538–550 (SSTATATSPLATT) are enriched in low complexity. Residues 561-577 (ARADSTHTRQGSYERRY) show a composition bias toward basic and acidic residues.

Belongs to the protein kinase superfamily. Ser/Thr protein kinase family. APG1/unc-51/ULK1 subfamily. As to quaternary structure, homodimer. Forms a ternary complex with ATG13 and ATG17.

It is found in the cytoplasm. The protein localises to the preautophagosomal structure membrane. It carries out the reaction L-seryl-[protein] + ATP = O-phospho-L-seryl-[protein] + ADP + H(+). The catalysed reaction is L-threonyl-[protein] + ATP = O-phospho-L-threonyl-[protein] + ADP + H(+). Functionally, serine/threonine protein kinase involved in the cytoplasm to vacuole transport (Cvt) and found to be essential in autophagy, where it is required for the formation of autophagosomes. Involved in the clearance of protein aggregates which cannot be efficiently cleared by the proteasome. Required for selective autophagic degradation of the nucleus (nucleophagy) as well as for mitophagy which contributes to regulate mitochondrial quantity and quality by eliminating the mitochondria to a basal level to fulfill cellular energy requirements and preventing excess ROS production. Also involved in endoplasmic reticulum-specific autophagic process, in selective removal of ER-associated degradation (ERAD) substrates. Plays a key role in ATG9 and ATG23 cycling through the pre-autophagosomal structure and is necessary to promote ATG18 binding to ATG9 through phosphorylation of ATG9. Catalyzes phosphorylation of ATG4, decreasing the interaction between ATG4 and ATG8 and impairing deconjugation of PE-conjugated forms of ATG8. Required for conidiation and development of aerial hyphae. The polypeptide is Serine/threonine-protein kinase atg1 (Aspergillus oryzae (strain ATCC 42149 / RIB 40) (Yellow koji mold)).